Here is a 416-residue protein sequence, read N- to C-terminus: 4-hydroxy-3-methylbut-2-en-1-yl diphosphate synthase (flavodoxin) (416 aa).

The [4Fe-4S] cluster site is built by Cys304, Cys307, Cys350, and Glu357.

It belongs to the IspG family. [4Fe-4S] cluster serves as cofactor.

The enzyme catalyses (2E)-4-hydroxy-3-methylbut-2-enyl diphosphate + oxidized [flavodoxin] + H2O + 2 H(+) = 2-C-methyl-D-erythritol 2,4-cyclic diphosphate + reduced [flavodoxin]. The protein operates within isoprenoid biosynthesis; isopentenyl diphosphate biosynthesis via DXP pathway; isopentenyl diphosphate from 1-deoxy-D-xylulose 5-phosphate: step 5/6. In terms of biological role, converts 2C-methyl-D-erythritol 2,4-cyclodiphosphate (ME-2,4cPP) into 1-hydroxy-2-methyl-2-(E)-butenyl 4-diphosphate. The protein is 4-hydroxy-3-methylbut-2-en-1-yl diphosphate synthase (flavodoxin) of Rhizobium etli (strain ATCC 51251 / DSM 11541 / JCM 21823 / NBRC 15573 / CFN 42).